The sequence spans 543 residues: Cytochrome P450 monooxygenase CYP1 (543 aa).

A helical membrane pass occupies residues serine 40 to serine 60. Residues asparagine 210 and asparagine 367 are each glycosylated (N-linked (GlcNAc...) asparagine). Position 478 (cysteine 478) interacts with heme. An N-linked (GlcNAc...) asparagine glycan is attached at asparagine 517.

It belongs to the cytochrome P450 family. Heme is required as a cofactor.

It localises to the membrane. It functions in the pathway secondary metabolite biosynthesis. Its function is as follows. Cytochrome P450 monooxygenase; part of the gene cluster that mediates the biosynthesis of a tyrosine-derived cytochalasan acting as a fungal signal recognized by resistant rice plants and leads to avirulence in Pi33 resistant rice cultivars. The first step in the pathway is catalyzed by the hybrid PKS-NRPS ACE1, assisted by the enoyl reductase RAP1, that are responsible for fusion of the tyrosine precursor and the polyketide backbone. The polyketide synthase module (PKS) of ACE1 is responsible for the synthesis of the polyketide backbone and the downstream nonribosomal peptide synthetase (NRPS) amidates the carboxyl end of the polyketide with the tyrosine precursor. Because ACE1 lacks a designated enoylreductase (ER) domain, the required activity is provided the enoyl reductase RAP1. Reduction by the hydrolyase ORFZ, followed by dehydration and intra-molecular Diels-Alder cyclization by the Diels-Alderase ORF3 then yield the required isoindolone-fused macrocycle. A number of oxidative steps catalyzed by the tailoring enzymes identified within the cluster, including cytochrome P450 monooxygenases CYP1 to CYP4, the FAD-linked oxidoreductase OXR2 and the short-chain dehydrogenase/reductase OXR1, are further required to afford the final cytochalasans that confer avirulence and which have still to be identified. The monooxygenase CYP1 has been shown to be a site-selective C-18 hydroxylase whereas the function of CYP3 is the site-selective epoxidation of the C-6/C-7 olefin that is present in some intermediate compounds. Finally, SYN2 and RAP2 are not required for avirulence in Pi33 resistant rice cultivars. This is Cytochrome P450 monooxygenase CYP1 from Pyricularia oryzae (strain 70-15 / ATCC MYA-4617 / FGSC 8958) (Rice blast fungus).